A 689-amino-acid chain; its full sequence is Elongation factor G (689 aa).

Residues 8–282 enclose the tr-type G domain; that stretch reads KKTRNIGIMA…AVIDYLPSPV (275 aa). GTP-binding positions include 17–24, 81–85, and 135–138; these read AHIDAGKT, DTPGH, and NKMD.

Belongs to the TRAFAC class translation factor GTPase superfamily. Classic translation factor GTPase family. EF-G/EF-2 subfamily.

The protein resides in the cytoplasm. Its function is as follows. Catalyzes the GTP-dependent ribosomal translocation step during translation elongation. During this step, the ribosome changes from the pre-translocational (PRE) to the post-translocational (POST) state as the newly formed A-site-bound peptidyl-tRNA and P-site-bound deacylated tRNA move to the P and E sites, respectively. Catalyzes the coordinated movement of the two tRNA molecules, the mRNA and conformational changes in the ribosome. The chain is Elongation factor G from Halothermothrix orenii (strain H 168 / OCM 544 / DSM 9562).